Consider the following 497-residue polypeptide: ATP-dependent RNA helicase CshA (497 aa).

The Q motif signature appears at 1 to 29; it reads MKFSELGLSDSLLKAIKRSGYEEATPIQE. One can recognise a Helicase ATP-binding domain in the interval 32 to 202; the sequence is IPMVLEGKDV…VQFMSDPETV (171 aa). 45–52 is an ATP binding site; it reads AQTGTGKT. The DEAD box motif lies at 150-153; the sequence is DEAD. Positions 228–373 constitute a Helicase C-terminal domain; the sequence is DIMTRLIDVQ…PLKPPTAEEA (146 aa). Residues 425-497 form a disordered region; sequence AASEVPVKIT…SFNIRHRKEN (73 aa). A compositionally biased stretch (low complexity) spans 448–458; it reads RNGNRNNSHGG. 2 stretches are compositionally biased toward basic residues: residues 459 to 473 and 481 to 497; these read NHYR…QHGS and KSHS…RKEN.

This sequence belongs to the DEAD box helicase family. CshA subfamily. As to quaternary structure, oligomerizes, may be a member of the RNA degradosome.

The protein localises to the cytoplasm. It localises to the cell membrane. It catalyses the reaction ATP + H2O = ADP + phosphate + H(+). Functionally, DEAD-box RNA helicase possibly involved in RNA degradation. Unwinds dsRNA in both 5'- and 3'-directions, has RNA-dependent ATPase activity. Over-expression leads to cell aggregation. The protein is ATP-dependent RNA helicase CshA of Limosilactobacillus reuteri (Lactobacillus reuteri).